The sequence spans 494 residues: Guanosine-5'-triphosphate,3'-diphosphate pyrophosphatase (494 aa).

The protein belongs to the GppA/Ppx family. GppA subfamily.

The enzyme catalyses guanosine 3'-diphosphate 5'-triphosphate + H2O = guanosine 3',5'-bis(diphosphate) + phosphate + H(+). The protein operates within purine metabolism; ppGpp biosynthesis; ppGpp from GTP: step 2/2. In terms of biological role, catalyzes the conversion of pppGpp to ppGpp. Guanosine pentaphosphate (pppGpp) is a cytoplasmic signaling molecule which together with ppGpp controls the 'stringent response', an adaptive process that allows bacteria to respond to amino acid starvation, resulting in the coordinated regulation of numerous cellular activities. The protein is Guanosine-5'-triphosphate,3'-diphosphate pyrophosphatase of Shigella flexneri serotype 5b (strain 8401).